Here is a 201-residue protein sequence, read N- to C-terminus: Large ribosomal subunit protein uL4 (201 aa).

Residues 42 to 67 (GNSAQKTRSEVSGGGKKPWNQKGTGR) form a disordered region.

Belongs to the universal ribosomal protein uL4 family. Part of the 50S ribosomal subunit.

Functionally, one of the primary rRNA binding proteins, this protein initially binds near the 5'-end of the 23S rRNA. It is important during the early stages of 50S assembly. It makes multiple contacts with different domains of the 23S rRNA in the assembled 50S subunit and ribosome. In terms of biological role, forms part of the polypeptide exit tunnel. This chain is Large ribosomal subunit protein uL4, found in Legionella pneumophila (strain Paris).